The following is a 386-amino-acid chain: V-type proton ATPase subunit B 2 (386 aa).

Belongs to the ATPase alpha/beta chains family. V-ATPase is a heteromultimeric enzyme composed of a peripheral catalytic V1 complex (main components: subunits A, B, C, D, E, and F) attached to an integral membrane V0 proton pore complex (main component: the proteolipid protein).

In terms of biological role, non-catalytic subunit of the peripheral V1 complex of vacuolar ATPase. V-ATPase is responsible for acidifying a variety of intracellular compartments in eukaryotic cells. This Gossypium hirsutum (Upland cotton) protein is V-type proton ATPase subunit B 2.